The chain runs to 340 residues: Glyceraldehyde-3-phosphate dehydrogenase, cytosolic (340 aa).

Residues 16–17, D38, and R85 contribute to the NAD(+) site; that span reads RI. Residues 156-158, T187, 216-217, and R239 each bind D-glyceraldehyde 3-phosphate; these read SCT and TG. The active-site Nucleophile is the C157. NAD(+) is bound at residue N321.

This sequence belongs to the glyceraldehyde-3-phosphate dehydrogenase family. As to quaternary structure, homotetramer.

It localises to the cytoplasm. The catalysed reaction is D-glyceraldehyde 3-phosphate + phosphate + NAD(+) = (2R)-3-phospho-glyceroyl phosphate + NADH + H(+). It participates in carbohydrate degradation; glycolysis; pyruvate from D-glyceraldehyde 3-phosphate: step 1/5. Its function is as follows. Key enzyme in glycolysis that catalyzes the first step of the pathway by converting D-glyceraldehyde 3-phosphate (G3P) into 3-phospho-D-glyceroyl phosphate. Essential for the maintenance of cellular ATP levels and carbohydrate metabolism. The polypeptide is Glyceraldehyde-3-phosphate dehydrogenase, cytosolic (GAPC) (Pinus sylvestris (Scotch pine)).